Here is a 443-residue protein sequence, read N- to C-terminus: Putative type II methyltransferase M.BsuMIIP (443 aa).

An SAM-dependent MTase C5-type domain is found at 4–440 (LRVMSLFSGI…QELIHTYVNK (437 aa)). Residue C78 is part of the active site.

The protein belongs to the class I-like SAM-binding methyltransferase superfamily. C5-methyltransferase family.

The enzyme catalyses a 2'-deoxycytidine in DNA + S-adenosyl-L-methionine = a 5-methyl-2'-deoxycytidine in DNA + S-adenosyl-L-homocysteine + H(+). In terms of biological role, a putative methylase, recognizes the double-stranded sequence 5'-GGCC-3', methylates C-?. There is no known cognate restriction enzyme. The chain is Putative type II methyltransferase M.BsuMIIP (mtbP) from Bacillus subtilis (strain 168).